Consider the following 137-residue polypeptide: Large ribosomal subunit protein uL16 (137 aa).

Residues 1 to 21 (MLSPKKVKFRKRQKGRLKGKA) are compositionally biased toward basic residues. Residues 1–22 (MLSPKKVKFRKRQKGRLKGKAQ) are disordered.

It belongs to the universal ribosomal protein uL16 family. Part of the 50S ribosomal subunit.

Its function is as follows. Binds 23S rRNA and is also seen to make contacts with the A and possibly P site tRNAs. The polypeptide is Large ribosomal subunit protein uL16 (Maridesulfovibrio salexigens (strain ATCC 14822 / DSM 2638 / NCIMB 8403 / VKM B-1763) (Desulfovibrio salexigens)).